The sequence spans 314 residues: MSKMTPQEMAAKIGSGLLSFPVTPFKADYSFDETTYRSNMDWLCGYDVAGLFAAGGTGEFFSLTAAEVPEVVKVAVDETKGRVPVLAGTGYGTAIAREIAMSAEKAGADGLLLLPPYLMHAEQEGLAAHVEAVCKSVKIGVIVYNRDNAILQPDTLARLCERCPNLVGYKDGIGDIELMTRVYTKMGDRLTYIGGLPTAETFALPYLDMGVTTYSSAVFNFVPEFATNFYAAVRKRDHATIHAGLKDFILPLIAIRNRKKGYAVSIIKAGMKVIGRDSGPVRLPLTDLTEAEMAELTALVKALPVAASAQQAAE.

Belongs to the DapA family.

The catalysed reaction is 5-dehydro-4-deoxy-D-glucarate + H(+) = 2,5-dioxopentanoate + CO2 + H2O. It functions in the pathway carbohydrate acid metabolism; D-glucarate degradation; 2,5-dioxopentanoate from D-glucarate: step 2/2. The polypeptide is Probable 5-dehydro-4-deoxyglucarate dehydratase (Bradyrhizobium sp. (strain ORS 278)).